Reading from the N-terminus, the 418-residue chain is uncharacterized protein (418 aa).

This is an uncharacterized protein from Saccharomyces cerevisiae (strain ATCC 204508 / S288c) (Baker's yeast).